The following is a 257-amino-acid chain: UPF0246 protein RSc2009 (257 aa).

This sequence belongs to the UPF0246 family.

This is UPF0246 protein RSc2009 from Ralstonia nicotianae (strain ATCC BAA-1114 / GMI1000) (Ralstonia solanacearum).